Reading from the N-terminus, the 294-residue chain is 33 kDa chaperonin (294 aa).

Disulfide bonds link Cys-239/Cys-241 and Cys-272/Cys-275.

Belongs to the HSP33 family. Under oxidizing conditions two disulfide bonds are formed involving the reactive cysteines. Under reducing conditions zinc is bound to the reactive cysteines and the protein is inactive.

The protein resides in the cytoplasm. Its function is as follows. Redox regulated molecular chaperone. Protects both thermally unfolding and oxidatively damaged proteins from irreversible aggregation. Plays an important role in the bacterial defense system toward oxidative stress. The protein is 33 kDa chaperonin of Listeria monocytogenes serovar 1/2a (strain ATCC BAA-679 / EGD-e).